The following is a 352-amino-acid chain: Protein-glutamate methylesterase/protein-glutamine glutaminase 2 (352 aa).

The Response regulatory domain maps to 1–116 (MVVDDSAVVR…KQFLTDSADE (116 aa)). Asp50 is subject to 4-aspartylphosphate. The 191-residue stretch at 162 to 352 (AQTTERIVAI…MAREIVTQLQ (191 aa)) folds into the CheB-type methylesterase domain. Active-site residues include Ser174, His200, and Asp296.

Belongs to the CheB family. Phosphorylated by CheA. Phosphorylation of the N-terminal regulatory domain activates the methylesterase activity.

It is found in the cytoplasm. The enzyme catalyses [protein]-L-glutamate 5-O-methyl ester + H2O = L-glutamyl-[protein] + methanol + H(+). It catalyses the reaction L-glutaminyl-[protein] + H2O = L-glutamyl-[protein] + NH4(+). Involved in chemotaxis. Part of a chemotaxis signal transduction system that modulates chemotaxis in response to various stimuli. Catalyzes the demethylation of specific methylglutamate residues introduced into the chemoreceptors (methyl-accepting chemotaxis proteins or MCP) by CheR. Also mediates the irreversible deamidation of specific glutamine residues to glutamic acid. This Xanthomonas euvesicatoria pv. vesicatoria (strain 85-10) (Xanthomonas campestris pv. vesicatoria) protein is Protein-glutamate methylesterase/protein-glutamine glutaminase 2.